The following is a 418-amino-acid chain: Sprouty-related, EVH1 domain-containing protein 2 (418 aa).

The WH1 domain maps to 5-122 (THPDDDSYIV…RGVRKAIEDL (118 aa)). The disordered stretch occupies residues 127 to 171 (TTSSSTIHNEAELGDDDVFTTATDSSSNSSQKREQPTRTISSPTS). Residues 146 to 156 (TTATDSSSNSS) are compositionally biased toward polar residues. The KBD domain occupies 201 to 257 (PYRQVSFPDDDEEIVRINPREKIWMTGYEDYRHAPVRGKYPDPSEDADSSYVRFAKG). Ser206 carries the phosphoserine modification. A phosphotyrosine mark is found at Tyr228 and Tyr231. The disordered stretch occupies residues 275-302 (GLGEDPKGRGGSVIKTQPSRGKSRRRKE). Residues 308–416 (RCVYCRDMFN…CRCCGGKHKA (109 aa)) enclose the SPR domain.

As to quaternary structure, homodimer and heterodimer. Able to interact with SPRED1 to form heterodimers. Interacts with RAS. May interact with ZDHHC13 (via ANK repeats) and ZDHHC17 (via ANK repeats). Interacts with TESK1. Interacts with NF1. Phosphorylated on serine and threonine residues. Phosphorylated on tyrosine. Phosphorylation of Tyr-228 and Tyr-231 are required for ubiquitination. Post-translationally, ubiquitinated; leading to degradation by the proteasome. In terms of tissue distribution, expressed in liver, skin, small intestine, salivary gland and prostate.

The protein localises to the cell membrane. It localises to the cytoplasmic vesicle. Its subcellular location is the secretory vesicle membrane. It is found in the cytoplasm. Negatively regulates Ras signaling pathways and downstream activation of MAP kinases. Recruits and translocates NF1 to the cell membrane, thereby enabling NF1-dependent hydrolysis of active GTP-bound Ras to inactive GDP-bound Ras. Inhibits fibroblast growth factor (FGF)-induced retinal lens fiber differentiation, probably by inhibiting FGF-mediated phosphorylation of ERK1/2. Inhibits TGFB-induced epithelial-to-mesenchymal transition in lens epithelial cells. This chain is Sprouty-related, EVH1 domain-containing protein 2 (SPRED2), found in Homo sapiens (Human).